Here is a 409-residue protein sequence, read N- to C-terminus: Inner membrane transport protein YqeG (409 aa).

The Periplasmic segment spans residues 1–25 (MSNIWSKEETLWSFALYGTAVGAGT). A helical transmembrane segment spans residues 26–46 (LFLPIQLGSAGAVVLFITALV). Residues 47–87 (AWPLTYWPHKALCQFILSSKTSAGEGITGAVTHYYGKKIGN) are Cytoplasmic-facing. The helical transmembrane segment at 88–108 (LITTLYFIAFFVVVLIYAVAI) threads the bilayer. At 109-127 (TNSLTEQLAKHMVIDLRIR) the chain is on the periplasmic side. The helical transmembrane segment at 128–148 (MLVSLGVVLILNLIFLMGRHA) threads the bilayer. The Cytoplasmic portion of the chain corresponds to 149–151 (TIR). A helical membrane pass occupies residues 152–172 (VMGFLVFPLIAYFLFLSIYLV). Residues 173–193 (GSWQPDLLTTQVEFNQNTLHQ) are Periplasmic-facing. A helical transmembrane segment spans residues 194–214 (IWISIPVMVFAFSHTPIISTF). The Cytoplasmic segment spans residues 215–235 (AIDRREKYGEHAMDKCKKIMK). Residues 236 to 256 (VAYLIICISVLFFVFSCLLSI) traverse the membrane as a helical segment. Over 257–276 (PPSYIEAAKEEGVTILSALS) the chain is Periplasmic. Residues 277–297 (MLPNAPAWLSISGIIVAVVAM) traverse the membrane as a helical segment. Residues 298–329 (SKSFLGTYFGVIEGATEVVKTTLQQVGVKKSR) are Cytoplasmic-facing. The helical transmembrane segment at 330-350 (AFNRALSIMLVSLITFIVCCI) threads the bilayer. Over 351 to 353 (NPN) the chain is Periplasmic. The helical transmembrane segment at 354–374 (AISMIYAISGPLIAMILFIMP) threads the bilayer. Residues 375–388 (TLSTYLIPALKPWR) lie on the Cytoplasmic side of the membrane. Residues 389–409 (SIGNLITLIVGILCVSVMFFS) form a helical membrane-spanning segment.

This sequence belongs to the amino acid/polyamine transporter 2 family. SdaC/TdcC subfamily.

The protein resides in the cell inner membrane. The sequence is that of Inner membrane transport protein YqeG (yqeG) from Escherichia coli O6:H1 (strain CFT073 / ATCC 700928 / UPEC).